The sequence spans 448 residues: Iroquois-class homeodomain protein irx-3 (448 aa).

The segment at residues 108–170 (DPSRPKNATR…NARRRLKKEN (63 aa)) is a DNA-binding region (homeobox; TALE-type). Disordered regions lie at residues 171–250 (KMTW…NAPE) and 387–410 (SGTASFPKAAEPKHSTDSLTDRSS). The segment covering 195–222 (KHEDDEEIDLENIDTEDIESKEDLDDPD) has biased composition (acidic residues). Residues 223-237 (TDIHSDSKTDARSDS) show a composition bias toward basic and acidic residues. Acidic residues predominate over residues 238 to 248 (EASDGFEDLNA). The segment covering 396–406 (AEPKHSTDSLT) has biased composition (basic and acidic residues).

This sequence belongs to the TALE/IRO homeobox family. In terms of tissue distribution, expressed in the neural plate in overlapping patterns with other irx members, which all share an anterior border of expression. Outside the nervous system and at tailbud stages, expressed in the developing otic vesicle, branchial arches, prospective heart region and pronephros.

The protein resides in the nucleus. Acts partially redundantly with other irx members in neural patterning. Required for formation of the posterior forebrain, midbrain, hindbrain, and to a lesser extent, spinal cord. Both up-regulates and down-regulates gene expression during neural development. Acts early in neural plate development to induce proneural gene expression and specify a neural precursor state. Also up-regulates repressors that prevent neuronal differentiation. Required during at least two stages of pronephros kidney development; during neurula stages, maintains transcription of key renal genes to define the size and identity of the pronephric anlage, probably in part through regulation of bmp-signaling. Subsequently required for proper formation of the intermediate tubule segment of the pronephros. This is Iroquois-class homeodomain protein irx-3 from Xenopus tropicalis (Western clawed frog).